Here is an 82-residue protein sequence, read N- to C-terminus: uncharacterized protein (82 aa).

This is an uncharacterized protein from Autographa californica nuclear polyhedrosis virus (AcMNPV).